The primary structure comprises 248 residues: Type III pantothenate kinase (248 aa).

6–13 (DCGNSLIK) lines the ATP pocket. Residues Tyr-92 and 99 to 102 (GLDR) each bind substrate. The active-site Proton acceptor is Asp-101. Residue Asp-121 coordinates K(+). Residue Thr-124 coordinates ATP. Thr-180 contributes to the substrate binding site.

It belongs to the type III pantothenate kinase family. In terms of assembly, homodimer. NH4(+) is required as a cofactor. The cofactor is K(+).

Its subcellular location is the cytoplasm. The catalysed reaction is (R)-pantothenate + ATP = (R)-4'-phosphopantothenate + ADP + H(+). Its pathway is cofactor biosynthesis; coenzyme A biosynthesis; CoA from (R)-pantothenate: step 1/5. In terms of biological role, catalyzes the phosphorylation of pantothenate (Pan), the first step in CoA biosynthesis. The chain is Type III pantothenate kinase from Pseudomonas aeruginosa (strain LESB58).